The chain runs to 192 residues: UPF0301 protein Bcep1808_0798 (192 aa).

It belongs to the UPF0301 (AlgH) family.

The sequence is that of UPF0301 protein Bcep1808_0798 from Burkholderia vietnamiensis (strain G4 / LMG 22486) (Burkholderia cepacia (strain R1808)).